Consider the following 241-residue polypeptide: Lipoprotein MxiJ (241 aa).

Residues 1-17 (MIRYKGFILFLLLMLIG) form the signal peptide. The N-palmitoyl cysteine moiety is linked to residue Cys-18. Cys-18 carries S-diacylglycerol cysteine lipidation.

It belongs to the YscJ lipoprotein family.

It is found in the cell outer membrane. Functionally, involved in the secretion of the Ipa antigens. This Shigella sonnei protein is Lipoprotein MxiJ (mxiJ).